We begin with the raw amino-acid sequence, 197 residues long: MNISELIHDFVLALVELGILLGSLGAVLLVNTVNSAFSLGLVFTCISLLYFVLNADFVAAAQLLVYVGAINVLTVFAVMITDEPAGSETTARGIGYIITAGTCTILFSILSFVIHNTKWSDLSLIPQSGISTSGTLGSNVQQLGYKLLGEFVIPFELLSILLLAALVGAINLARNEDAFIVNKKSAASAPYKNSTFF.

The next 5 membrane-spanning stretches (helical) occupy residues 10–30 (FVLA…VLLV), 39–59 (LGLV…DFVA), 60–80 (AAQL…AVMI), 94–114 (IGYI…SFVI), and 147–167 (LLGE…AALV).

This sequence belongs to the complex I subunit 6 family. In terms of assembly, NDH is composed of at least 16 different subunits, 5 of which are encoded in the nucleus.

It is found in the plastid. The protein resides in the chloroplast thylakoid membrane. The enzyme catalyses a plastoquinone + NADH + (n+1) H(+)(in) = a plastoquinol + NAD(+) + n H(+)(out). It catalyses the reaction a plastoquinone + NADPH + (n+1) H(+)(in) = a plastoquinol + NADP(+) + n H(+)(out). NDH shuttles electrons from NAD(P)H:plastoquinone, via FMN and iron-sulfur (Fe-S) centers, to quinones in the photosynthetic chain and possibly in a chloroplast respiratory chain. The immediate electron acceptor for the enzyme in this species is believed to be plastoquinone. Couples the redox reaction to proton translocation, and thus conserves the redox energy in a proton gradient. The polypeptide is NAD(P)H-quinone oxidoreductase subunit 6, chloroplastic (ndhG) (Adiantum capillus-veneris (Maidenhair fern)).